Here is an 87-residue protein sequence, read N- to C-terminus: UPF0473 protein Daud_0916 (87 aa).

This sequence belongs to the UPF0473 family.

This is UPF0473 protein Daud_0916 from Desulforudis audaxviator (strain MP104C).